Here is a 258-residue protein sequence, read N- to C-terminus: Global transcriptional regulator CodY (258 aa).

Residues 1–156 are GAF domain; sequence MSILLNKTRK…SATIVGLEIL (156 aa). Residues 204-223 constitute a DNA-binding region (H-T-H motif); the sequence is ASKIADKVGITRSVIVNALR.

The protein belongs to the CodY family.

It is found in the cytoplasm. DNA-binding global transcriptional regulator which is involved in the adaptive response to starvation and acts by directly or indirectly controlling the expression of numerous genes in response to nutrient availability. During rapid exponential growth, CodY is highly active and represses genes whose products allow adaptation to nutrient depletion. This Clostridium acetobutylicum (strain ATCC 824 / DSM 792 / JCM 1419 / IAM 19013 / LMG 5710 / NBRC 13948 / NRRL B-527 / VKM B-1787 / 2291 / W) protein is Global transcriptional regulator CodY.